Reading from the N-terminus, the 244-residue chain is DNA repair protein RecO (244 aa).

Belongs to the RecO family.

Its function is as follows. Involved in DNA repair and RecF pathway recombination. The polypeptide is DNA repair protein RecO (Myxococcus xanthus (strain DK1622)).